The sequence spans 326 residues: Phospho-N-acetylmuramoyl-pentapeptide-transferase (326 aa).

9 helical membrane passes run isoleucine 3 to isoleucine 23, threonine 51 to phenylalanine 71, valine 79 to leucine 99, leucine 115 to isoleucine 135, valine 138 to valine 158, glycine 169 to alanine 189, methionine 195 to asparagine 215, valine 221 to histidine 243, and phenylalanine 306 to methionine 326.

This sequence belongs to the glycosyltransferase 4 family. MraY subfamily. Mg(2+) is required as a cofactor.

Its subcellular location is the cell membrane. It catalyses the reaction UDP-N-acetyl-alpha-D-muramoyl-L-alanyl-gamma-D-glutamyl-L-lysyl-D-alanyl-D-alanine + di-trans,octa-cis-undecaprenyl phosphate = Mur2Ac(oyl-L-Ala-gamma-D-Glu-L-Lys-D-Ala-D-Ala)-di-trans,octa-cis-undecaprenyl diphosphate + UMP. The protein operates within cell wall biogenesis; peptidoglycan biosynthesis. Catalyzes the initial step of the lipid cycle reactions in the biosynthesis of the cell wall peptidoglycan: transfers peptidoglycan precursor phospho-MurNAc-pentapeptide from UDP-MurNAc-pentapeptide onto the lipid carrier undecaprenyl phosphate, yielding undecaprenyl-pyrophosphoryl-MurNAc-pentapeptide, known as lipid I. The sequence is that of Phospho-N-acetylmuramoyl-pentapeptide-transferase from Streptococcus pneumoniae serotype 19F (strain G54).